Reading from the N-terminus, the 119-residue chain is MTNTRAIYAVIAILAIVISAVESTGDFGDSLDFVRAGSSSLFSGCTGSIAECIAEEEEMEFDSDISRRILAQKKYISYGAMRRNSVPCSRRGASYYNCQRGAQANPYSRGCSTITRCRR.

Residues 1-23 form the signal peptide; it reads MTNTRAIYAVIAILAIVISAVES. Positions 24–70 are cleaved as a propeptide — removed in mature form; sequence TGDFGDSLDFVRAGSSSLFSGCTGSIAECIAEEEEMEFDSDISRRIL. Cystine bridges form between Cys-88-Cys-98 and Cys-111-Cys-117.

This sequence belongs to the plant rapid alkalinization factor (RALF) family. Post-translationally, proteolytically cleaved, probably by S1P, a subtilisin-like serine protease (subtilase).

The protein resides in the secreted. Functionally, cell signaling peptide that may regulate plant stress, growth, and development. Mediates a rapid alkalinization of extracellular space by mediating a transient increase in the cytoplasmic Ca(2+) concentration leading to a calcium-dependent signaling events through a cell surface receptor and a concomitant activation of some intracellular mitogen-activated protein kinases. In Arabidopsis thaliana (Mouse-ear cress), this protein is Protein RALF-like 22 (RALFL22).